Reading from the N-terminus, the 639-residue chain is Complex I assembly factor Egm, mitochondrial (639 aa).

The transit peptide at 1–26 (MRPNLFSGASRLLTYSRNGKLLTRGR) directs the protein to the mitochondrion. The interval 23–65 (TRGRSTKATSSSLDSQHQDAATTEGGRAESVEESPEQQRKLPT) is disordered. Residues 28-43 (TKATSSSLDSQHQDAA) are compositionally biased toward polar residues. Residues 48 to 65 (GRAESVEESPEQQRKLPT) show a composition bias toward basic and acidic residues.

It belongs to the acyl-CoA dehydrogenase family. Associates with mitochondrial complex I assembly intermediates during its biogenesis. FAD is required as a cofactor.

It localises to the mitochondrion. Functionally, as part of the MCIA complex, primarily participates in the assembly of the mitochondrial complex I and therefore plays a role in oxidative phosphorylation. In Drosophila melanogaster (Fruit fly), this protein is Complex I assembly factor Egm, mitochondrial.